A 347-amino-acid chain; its full sequence is Protein RecA (347 aa).

Residue 66–73 coordinates ATP; the sequence is GPESSGKT.

This sequence belongs to the RecA family.

It is found in the cytoplasm. Can catalyze the hydrolysis of ATP in the presence of single-stranded DNA, the ATP-dependent uptake of single-stranded DNA by duplex DNA, and the ATP-dependent hybridization of homologous single-stranded DNAs. It interacts with LexA causing its activation and leading to its autocatalytic cleavage. The chain is Protein RecA from Burkholderia cepacia (Pseudomonas cepacia).